A 235-amino-acid polypeptide reads, in one-letter code: N-alpha-acetyltransferase 10 (235 aa).

M1 is subject to N-acetylmethionine. The interval 1-58 (MNIRNARPEDLMNMQHCNLLCLPENYQMKYYFYHGLSWPQLSYIAEDENGKIVGYVLA) is interaction with NAA15. An N-acetyltransferase domain is found at 1 to 152 (MNIRNARPED…DAYAMKRDLT (152 aa)). K136 carries the N6-acetyllysine; by autocatalysis modification. The interval 178 to 235 (NKVESKGNSPPSSGEACREEKGLAAEDSGGDSKDLSEVSETTESTDVKDSSEASDSAS) is disordered. A phosphoserine mark is found at S182, S186, and S205. Residues 193-213 (ACREEKGLAAEDSGGDSKDLS) are compositionally biased toward basic and acidic residues. Phosphoserine; by IKKB is present on S209. A phosphoserine mark is found at S213 and S216.

The protein belongs to the acetyltransferase family. ARD1 subfamily. Component of the N-terminal acetyltransferase A complex (also called the NatA complex) composed of NAA10 and NAA15. Within the complex interacts with NAA15. Component of the N-terminal acetyltransferase A (NatA)/HYPK complex at least composed of NAA10, NAA15 and HYPK, which has N-terminal acetyltransferase activity. In complex with NAA15, interacts with HYPK. Component of the N-terminal acetyltransferase E (NatE) complex at least composed of NAA10, NAA15 and NAA50. Within the complex interacts with NAA15; the interaction is required for binding to NAAT50. Interacts with NAAT50. The interaction of the NatA complex with NAA50 reduces the acetylation activity of the NatA complex. Component of the N-terminal acetyltransferase E (NatE)/HYPK complex at least composed of NAA10, NAA15, NAA50 and HYPK. In complex with NAA15, interacts with HYPK; the interaction with HYPK reduces the capacity of the NatA complex to interact with NAA50. Interacts with HIF1A (via its ODD domain); the interaction increases HIF1A protein stability during normoxia, an down-regulates it when induced by hypoxia. Interacts with the ribosome. Binds to MYLK. Interacts with NAA16. Interacts (via its C-terminal domain) with TSC2, leading to its acetylation. Interacts with IKBKB. Interacts with HSPA1A and HSPA1B leading to its acetylation. Cleaved by caspases during apoptosis. Post-translationally, phosphorylation by IKBKB/IKKB at Ser-209 promotes its proteasome-mediated degradation. In terms of processing, autoacetylated at Lys-136 which stimulates its catalytic activity. Ubiquitous.

Its subcellular location is the cytoplasm. The protein resides in the nucleus. It carries out the reaction N-terminal glycyl-[protein] + acetyl-CoA = N-terminal N(alpha)-acetylglycyl-[protein] + CoA + H(+). The catalysed reaction is N-terminal L-alanyl-[protein] + acetyl-CoA = N-terminal N(alpha)-acetyl-L-alanyl-[protein] + CoA + H(+). It catalyses the reaction N-terminal L-seryl-[protein] + acetyl-CoA = N-terminal N(alpha)-acetyl-L-seryl-[protein] + CoA + H(+). The enzyme catalyses N-terminal L-valyl-[protein] + acetyl-CoA = N-terminal N(alpha)-acetyl-L-valyl-[protein] + CoA + H(+). It carries out the reaction N-terminal L-cysteinyl-[protein] + acetyl-CoA = N-terminal N(alpha)-acetyl-L-cysteinyl-[protein] + CoA + H(+). The catalysed reaction is N-terminal L-threonyl-[protein] + acetyl-CoA = N-terminal N(alpha)-acetyl-L-threonyl-[protein] + CoA + H(+). Functionally, catalytic subunit of N-terminal acetyltransferase complexes which display alpha (N-terminal) acetyltransferase activity. Acetylates amino termini that are devoid of initiator methionine. The alpha (N-terminal) acetyltransferase activity may be important for vascular, hematopoietic and neuronal growth and development. Without NAA15, displays epsilon (internal) acetyltransferase activity towards HIF1A, thereby promoting its degradation. Represses MYLK kinase activity by acetylation, and thus represses tumor cell migration. Acetylates, and stabilizes TSC2, thereby repressing mTOR activity and suppressing cancer development. Acetylates HSPA1A and HSPA1B at 'Lys-77' which enhances its chaperone activity and leads to preferential binding to co-chaperone HOPX. Acetylates HIST1H4A. Acts as a negative regulator of sister chromatid cohesion during mitosis. In Homo sapiens (Human), this protein is N-alpha-acetyltransferase 10 (NAA10).